We begin with the raw amino-acid sequence, 285 residues long: Orotidine 5'-phosphate decarboxylase (285 aa).

Substrate contacts are provided by residues D40, 62-64, 93-102, Y235, and R253; these read KTH and DRKFVDIGST. Residue K95 is the Proton donor of the active site.

It belongs to the OMP decarboxylase family.

The catalysed reaction is orotidine 5'-phosphate + H(+) = UMP + CO2. It participates in pyrimidine metabolism; UMP biosynthesis via de novo pathway; UMP from orotate: step 2/2. The polypeptide is Orotidine 5'-phosphate decarboxylase (URA3) (Paracoccidioides brasiliensis).